We begin with the raw amino-acid sequence, 292 residues long: MIKIIYLIVLLVLLFKNNHIIIKADDCPFPQIPIKTLSGTWYDDPDHASCGFEKLTGPLGPGNRLVVALGSKLFDKGANCGQCYDVTSPFNNKTITVMATDSCHDAGYCQADNHFDFYKEAFDLLGSPSGVISGNSGLSYIKVPCPTYGNVKIMMKDGSNEFWTSFLIFNSRILIKQVSIKLSNSQQFIDLNRQPQGNYWPSTNMVSGEFEVRIESIGGEFIYVKIPSIESRKIYDTGNQFSADGCVGNKYDPYAPFQITSNSNNILPPSLYIIFLISILFLIINNIFSNKY.

The first 24 residues, 1–24 (MIKIIYLIVLLVLLFKNNHIIIKA), serve as a signal peptide directing secretion. Residues 25–267 (DDCPFPQIPI…QITSNSNNIL (243 aa)) lie on the Extracellular side of the membrane. The Expansin-like EG45 domain maps to 47 to 150 (HASCGFEKLT…IKVPCPTYGN (104 aa)). 2 disulfide bridges follow: cysteine 50/cysteine 80 and cysteine 83/cysteine 145. Asparagine 92 carries an N-linked (GlcNAc...) asparagine glycan. Residues 268-288 (PPSLYIIFLISILFLIINNIF) traverse the membrane as a helical segment. Residues 289 to 292 (SNKY) lie on the Cytoplasmic side of the membrane.

This sequence belongs to the expansin family. Expansin A subfamily.

It is found in the membrane. Functionally, may serve to lubricate the movement of the cellulose microfibrils during cell growth and wall extension and/or may serve to maintain the fluid state of the slug cell wall. The chain is Expansin-like protein 6 (expl6) from Dictyostelium discoideum (Social amoeba).